The chain runs to 458 residues: UDP-N-acetylmuramate--L-alanine ligase (458 aa).

Residue 115–121 (GSHGKTT) participates in ATP binding.

This sequence belongs to the MurCDEF family.

It is found in the cytoplasm. It catalyses the reaction UDP-N-acetyl-alpha-D-muramate + L-alanine + ATP = UDP-N-acetyl-alpha-D-muramoyl-L-alanine + ADP + phosphate + H(+). Its pathway is cell wall biogenesis; peptidoglycan biosynthesis. Cell wall formation. This is UDP-N-acetylmuramate--L-alanine ligase from Anaeromyxobacter sp. (strain Fw109-5).